We begin with the raw amino-acid sequence, 352 residues long: Photosystem II D2 protein (352 aa).

Thr-2 is subject to N-acetylthreonine. Residue Thr-2 is modified to Phosphothreonine. The chain crosses the membrane as a helical span at residues 40 to 60 (CAYFALGGWLTGTTFVTSWYT). Position 117 (His-117) interacts with chlorophyll a. Residues 124 to 140 (GFMLRQFEIARSVNLRP) traverse the membrane as a helical segment. Pheophytin a-binding residues include Gln-129 and Asn-142. Residues 152–165 (VFVSVFLIYPLGQS) form a helical membrane-spanning segment. Residue His-197 coordinates chlorophyll a. The chain crosses the membrane as a helical span at residues 207–227 (AALLCAIHGATVENTLFEDGD). 2 residues coordinate a plastoquinone: His-214 and Phe-261. A Fe cation-binding site is contributed by His-214. His-268 is a binding site for Fe cation. Residues 278–294 (GLWMSAIGVVGLALNLR) form a helical membrane-spanning segment.

Belongs to the reaction center PufL/M/PsbA/D family. As to quaternary structure, PSII is composed of 1 copy each of membrane proteins PsbA, PsbB, PsbC, PsbD, PsbE, PsbF, PsbH, PsbI, PsbJ, PsbK, PsbL, PsbM, PsbT, PsbX, PsbY, PsbZ, Psb30/Ycf12, at least 3 peripheral proteins of the oxygen-evolving complex and a large number of cofactors. It forms dimeric complexes. The cofactor is The D1/D2 heterodimer binds P680, chlorophylls that are the primary electron donor of PSII, and subsequent electron acceptors. It shares a non-heme iron and each subunit binds pheophytin, quinone, additional chlorophylls, carotenoids and lipids. There is also a Cl(-1) ion associated with D1 and D2, which is required for oxygen evolution. The PSII complex binds additional chlorophylls, carotenoids and specific lipids.. Post-translationally, phosphorylated in vitro.

The protein localises to the plastid. It is found in the chloroplast thylakoid membrane. It catalyses the reaction 2 a plastoquinone + 4 hnu + 2 H2O = 2 a plastoquinol + O2. In terms of biological role, photosystem II (PSII) is a light-driven water:plastoquinone oxidoreductase that uses light energy to abstract electrons from H(2)O, generating O(2) and a proton gradient subsequently used for ATP formation. It consists of a core antenna complex that captures photons, and an electron transfer chain that converts photonic excitation into a charge separation. The D1/D2 (PsbA/PsbD) reaction center heterodimer binds P680, the primary electron donor of PSII as well as several subsequent electron acceptors. D2 is needed for assembly of a stable PSII complex. The chain is Photosystem II D2 protein from Chlamydomonas reinhardtii (Chlamydomonas smithii).